Here is a 788-residue protein sequence, read N- to C-terminus: Endonuclease MutS2 (788 aa).

332-339 contributes to the ATP binding site; it reads GPNTGGKT. The Smr domain maps to 713 to 788; the sequence is VDLRGMDAEE…GTGVTVVELK (76 aa).

Belongs to the DNA mismatch repair MutS family. MutS2 subfamily. Homodimer. Binds to stalled ribosomes, contacting rRNA.

Its function is as follows. Endonuclease that is involved in the suppression of homologous recombination and thus may have a key role in the control of bacterial genetic diversity. Functionally, acts as a ribosome collision sensor, splitting the ribosome into its 2 subunits. Detects stalled/collided 70S ribosomes which it binds and splits by an ATP-hydrolysis driven conformational change. Acts upstream of the ribosome quality control system (RQC), a ribosome-associated complex that mediates the extraction of incompletely synthesized nascent chains from stalled ribosomes and their subsequent degradation. Probably generates substrates for RQC. This chain is Endonuclease MutS2, found in Clostridium botulinum (strain Kyoto / Type A2).